A 336-amino-acid chain; its full sequence is tRNA N6-adenosine threonylcarbamoyltransferase (336 aa).

Residues His-114 and His-118 each contribute to the Fe cation site. Substrate-binding positions include 136–140 (LVSGG), Asp-169, Gly-182, Asp-186, and Asn-275. Asp-301 is a Fe cation binding site.

This sequence belongs to the KAE1 / TsaD family. Fe(2+) serves as cofactor.

The protein resides in the cytoplasm. It carries out the reaction L-threonylcarbamoyladenylate + adenosine(37) in tRNA = N(6)-L-threonylcarbamoyladenosine(37) in tRNA + AMP + H(+). Functionally, required for the formation of a threonylcarbamoyl group on adenosine at position 37 (t(6)A37) in tRNAs that read codons beginning with adenine. Is involved in the transfer of the threonylcarbamoyl moiety of threonylcarbamoyl-AMP (TC-AMP) to the N6 group of A37, together with TsaE and TsaB. TsaD likely plays a direct catalytic role in this reaction. This chain is tRNA N6-adenosine threonylcarbamoyltransferase, found in Streptococcus pneumoniae serotype 4 (strain ATCC BAA-334 / TIGR4).